Reading from the N-terminus, the 584-residue chain is Transcription factor 7-like 1 (584 aa).

The segment covering 1–28 (MPQLGGGRGGAGGGGGGSGAGATSGGDD) has biased composition (gly residues). The interval 1 to 71 (MPQLGGGRGG…VKSSLVNESE (71 aa)) is CTNNB1-binding. Disordered regions lie at residues 1–99 (MPQL…RDYF), 159–179 (ATVKDTRSPSPAHLSNKVPVV), and 194–231 (YSNDHFSPASPPTHLSPEIDPKTGIPRPPHPSELSPYY). Positions 64–78 (SSLVNESENQSSSSD) are enriched in low complexity. Residues 80–99 (EAERRPQPARDAFQKPRDYF) show a composition bias toward basic and acidic residues. Residues 342-410 (VKKPLNAFML…LHAQLYPTWS (69 aa)) constitute a DNA-binding region (HMG box). Residues 412–501 (RDNYGKKKKR…HSEQAQPLSL (90 aa)) form a disordered region. The Nuclear localization signal motif lies at 417-423 (KKKKRKR). 2 stretches are compositionally biased toward low complexity: residues 427 to 437 (LSQTQSQQQIQ) and 470 to 491 (SALDSPATPSAALASPAAPAAT). Over residues 492-501 (HSEQAQPLSL) the composition is skewed to polar residues.

This sequence belongs to the TCF/LEF family. As to quaternary structure, binds the armadillo repeat of CTNNB1 and forms a stable complex. Interacts with DAZAP2. Detected in the basal layer of epidermis and in outer root sheath and bulge of hair follicles.

Its subcellular location is the nucleus. Its function is as follows. Participates in the Wnt signaling pathway. Binds to DNA and acts as a repressor in the absence of CTNNB1, and as an activator in its presence. Necessary for the terminal differentiation of epidermal cells, the formation of keratohyalin granules and the development of the barrier function of the epidermis. In Mus musculus (Mouse), this protein is Transcription factor 7-like 1 (Tcf7l1).